The chain runs to 212 residues: ATP phosphoribosyltransferase (212 aa).

Belongs to the ATP phosphoribosyltransferase family. Short subfamily. In terms of assembly, heteromultimer composed of HisG and HisZ subunits.

Its subcellular location is the cytoplasm. It carries out the reaction 1-(5-phospho-beta-D-ribosyl)-ATP + diphosphate = 5-phospho-alpha-D-ribose 1-diphosphate + ATP. The protein operates within amino-acid biosynthesis; L-histidine biosynthesis; L-histidine from 5-phospho-alpha-D-ribose 1-diphosphate: step 1/9. Catalyzes the condensation of ATP and 5-phosphoribose 1-diphosphate to form N'-(5'-phosphoribosyl)-ATP (PR-ATP). Has a crucial role in the pathway because the rate of histidine biosynthesis seems to be controlled primarily by regulation of HisG enzymatic activity. The chain is ATP phosphoribosyltransferase from Clostridium novyi (strain NT).